A 202-amino-acid polypeptide reads, in one-letter code: Nascent polypeptide-associated complex subunit alpha (202 aa).

Residues M1–V19 show a composition bias toward basic and acidic residues. Residues M1–V44 are disordered. Over residues A22–E32 the composition is skewed to acidic residues. Residues S46 to A111 form the NAC-A/B domain. The tract at residues Q118 to A165 is disordered. Residues A125 to A150 are compositionally biased toward basic and acidic residues. The segment covering E151–G162 has biased composition (acidic residues). Residues L163–I202 enclose the UBA domain.

Belongs to the NAC-alpha family. As to quaternary structure, part of the nascent polypeptide-associated complex (NAC), consisting of egd2 and egd1. NAC associates with ribosomes via egd1.

Its subcellular location is the cytoplasm. The protein localises to the nucleus. Functionally, component of the nascent polypeptide-associated complex (NAC), a dynamic component of the ribosomal exit tunnel, protecting the emerging polypeptides from interaction with other cytoplasmic proteins to ensure appropriate nascent protein targeting. The NAC complex also promotes mitochondrial protein import by enhancing productive ribosome interactions with the outer mitochondrial membrane and blocks the inappropriate interaction of ribosomes translating non-secretory nascent polypeptides with translocation sites in the membrane of the endoplasmic reticulum. Egd2 may also be involved in transcription regulation. The sequence is that of Nascent polypeptide-associated complex subunit alpha (egd2) from Aspergillus terreus (strain NIH 2624 / FGSC A1156).